The chain runs to 96 residues: Antitoxin TacA3 (96 aa).

The segment at 61–96 is neutralization domain; that stretch reads YLTERDTKMIMEILDNPPAPNEKLLAAAFALPDMKK.

The protein belongs to the TacA antitoxin family. As to quaternary structure, forms a complex with cognate toxin TacT3. Forms a 4:2 antitoxin:toxin complex with cognate toxin TacT3. Forms a 4:4 antitoxin:toxin complex with promoter DNA, where 2 TacT3 dimers bridge 2 TacA3 dimers. Only TacA3 contacts promoter DNA.

Antitoxin component of a type II toxin-antitoxin (TA) system. Counteracts the toxic effect of cognate toxin TacT3, but not TacT1 or TacT2. Plays a role in persister cell formation. Functionally, the TacA3-TacT3 complex both represses and derepresses expression of its own operon. The hexameric 4:2 TacA3-TacT3 complex binds promoter DNA and represses its transcription; both subunits are required. The octomeric 4:4 TacA3-TacT3 complex derepresses the operon. The shift from hexameric to octomeric complex probably alters DNA-binding, leading to dissociation from the operator DNA and derepression. Does not bind the promoter of the TacA1-TacT1 operon. This Salmonella typhimurium (strain 14028s / SGSC 2262) protein is Antitoxin TacA3.